The chain runs to 938 residues: Protein translocase subunit SecA (938 aa).

Residues glutamine 90, glycine 108 to threonine 112, and aspartate 504 each bind ATP.

It belongs to the SecA family. In terms of assembly, monomer and homodimer. Part of the essential Sec protein translocation apparatus which comprises SecA, SecYEG and auxiliary proteins SecDF. Other proteins may also be involved.

It is found in the cell inner membrane. It localises to the cellular thylakoid membrane. The protein localises to the cytoplasm. It carries out the reaction ATP + H2O + cellular proteinSide 1 = ADP + phosphate + cellular proteinSide 2.. Part of the Sec protein translocase complex. Interacts with the SecYEG preprotein conducting channel. Has a central role in coupling the hydrolysis of ATP to the transfer of proteins into and across the cell membrane, serving as an ATP-driven molecular motor driving the stepwise translocation of polypeptide chains across the membrane. In terms of biological role, probably participates in protein translocation into and across both the cytoplasmic and thylakoid membranes in cyanobacterial cells. This Microcystis aeruginosa (strain NIES-843 / IAM M-2473) protein is Protein translocase subunit SecA.